The primary structure comprises 276 residues: Malectin-A (276 aa).

A signal peptide spans 1–26 (MLSIRTVLGPLATILLTVLGPFGAHG). The Lumenal segment spans residues 27–253 (SGLADKVIWA…TPNPYASDNS (227 aa)). A carbohydrate-binding residues include Tyr-67, Tyr-89, Tyr-116, Phe-117, and Asp-186. The segment at 204–247 (PMLQPHPGLEKKEEEEEEEEEEGSTSKKQINKNRVQSGPRTPNP) is disordered. Residues 216-226 (EEEEEEEEEEG) show a composition bias toward acidic residues. The span at 229-247 (SKKQINKNRVQSGPRTPNP) shows a compositional bias: polar residues. Asn-252 carries an N-linked (GlcNAc...) asparagine glycan. A helical membrane pass occupies residues 254–274 (SLMFPILVAFGVFIPTLFCLC). The Cytoplasmic segment spans residues 275 to 276 (RL).

This sequence belongs to the malectin family. As to expression, widely expressed throughout development including the anterior neuroectoderm and neural crest at stages 18 and 20, and the retina, hatching gland, otic vesicle, epibranchial placodes, pronephros and tail tip of later states. At stage 41, expressed in the liver, pancreas, branchial arches and proctodeum. Expressed broadly in adults in fat, intestine, gall bladder, eye, muscle, kidney, stomach, liver, heart, pancreas and lung.

It is found in the endoplasmic reticulum membrane. Functionally, carbohydrate-binding protein with a strong ligand preference for Glc2-N-glycan. May play a role in the early steps of protein N-glycosylation. Can bind di- or higher oligomers but not monomers of glucose, including maltose, maltotriose, maltotetraose, maltoheptaose, nigerose, kojibose, cellobiose and isomaltose, although based on their subcellular locations, these are unlikely to all be physiological ligands. This Xenopus laevis (African clawed frog) protein is Malectin-A.